Consider the following 116-residue polypeptide: Ribosome-binding factor A (116 aa).

This sequence belongs to the RbfA family. In terms of assembly, monomer. Binds 30S ribosomal subunits, but not 50S ribosomal subunits or 70S ribosomes.

Its subcellular location is the cytoplasm. One of several proteins that assist in the late maturation steps of the functional core of the 30S ribosomal subunit. Associates with free 30S ribosomal subunits (but not with 30S subunits that are part of 70S ribosomes or polysomes). Required for efficient processing of 16S rRNA. May interact with the 5'-terminal helix region of 16S rRNA. This is Ribosome-binding factor A from Enterococcus faecalis (strain ATCC 700802 / V583).